Reading from the N-terminus, the 215-residue chain is UPF0502 protein YceH (215 aa).

Belongs to the UPF0502 family.

This chain is UPF0502 protein YceH, found in Salmonella paratyphi A (strain ATCC 9150 / SARB42).